A 383-amino-acid chain; its full sequence is tRNA-specific 2-thiouridylase MnmA (383 aa).

ATP-binding positions include 10–17 (AMSGGVDS) and methionine 36. The active-site Nucleophile is the cysteine 107. Residues cysteine 107 and cysteine 206 are joined by a disulfide bond. Residue glycine 131 participates in ATP binding. The interval 155–157 (KDQ) is interaction with tRNA. Residue cysteine 206 is the Cysteine persulfide intermediate of the active site. Residues 315-316 (RY) form an interaction with tRNA region.

It belongs to the MnmA/TRMU family.

It localises to the cytoplasm. It carries out the reaction S-sulfanyl-L-cysteinyl-[protein] + uridine(34) in tRNA + AH2 + ATP = 2-thiouridine(34) in tRNA + L-cysteinyl-[protein] + A + AMP + diphosphate + H(+). Its function is as follows. Catalyzes the 2-thiolation of uridine at the wobble position (U34) of tRNA, leading to the formation of s(2)U34. The chain is tRNA-specific 2-thiouridylase MnmA from Salinibacter ruber (strain DSM 13855 / M31).